The following is a 371-amino-acid chain: Glycerate kinase (371 aa).

It belongs to the glycerate kinase type-1 family.

The enzyme catalyses (R)-glycerate + ATP = (2R)-3-phosphoglycerate + ADP + H(+). This is Glycerate kinase (glxK) from Neisseria meningitidis serogroup B (strain ATCC BAA-335 / MC58).